A 194-amino-acid polypeptide reads, in one-letter code: Cation channel sperm-associated auxiliary subunit zeta (194 aa).

Component of the CatSper complex or CatSpermasome composed of the core pore-forming members CATSPER1, CATSPER2, CATSPER3 and CATSPER4 as well as auxiliary members CATSPERB, CATSPERG2, CATSPERD, CATSPERE, CATSPERZ, C2CD6/CATSPERT, SLCO6C1, TMEM249, TMEM262 and EFCAB9. HSPA1 may be an additional auxiliary complex member. The core complex members CATSPER1, CATSPER2, CATSPER3 and CATSPER4 form a heterotetrameric channel. The auxiliary CATSPERB, CATSPERG2, CATSPERD and CATSPERE subunits form a pavilion-like structure over the pore which stabilizes the complex through interactions with CATSPER4, CATSPER3, CATSPER1 and CATSPER2 respectively. SLCO6C1 interacts with CATSPERE and TMEM262/CATSPERH interacts with CATSPERB, further stabilizing the complex. C2CD6/CATSPERT interacts at least with CATSPERD and is required for targeting the CatSper complex in the flagellar membrane. Interacts with EFCAB9; the interaction is direct, Ca(2+)-dependent and connects EFCAB9 with the CatSper complex. Dissociates from EFCAB9 at elevated pH. In terms of tissue distribution, testis-specific. Expressed in adult but not in fetal testis. Not expressed in ovary. Within testis, expression is restricted to spermatids.

It is found in the cell projection. It localises to the cilium. Its subcellular location is the flagellum membrane. Auxiliary component of the CatSper complex, a complex involved in sperm cell hyperactivation. Sperm cell hyperactivation is needed for sperm motility which is essential late in the preparation of sperm for fertilization. Required for a distribution of the CatSper complex in linear quadrilateral nanodomains along the flagellum, maximizing fertilization inside the mammalian female reproductive tract. Together with EFCAB9, associates with the CatSper channel pore and is required for the two-row structure of each single CatSper channel. In Mus musculus (Mouse), this protein is Cation channel sperm-associated auxiliary subunit zeta.